Consider the following 1096-residue polypeptide: Eukaryotic translation initiation factor 3 subunit A (1096 aa).

A PCI domain is found at 323-502; sequence QATRVLLATL…GSIHFGAADA (180 aa). Coiled-coil stretches lie at residues 591–643, 677–761, and 811–839; these read SERQ…IDRK, SVLR…RMQK, and KEGA…ERRA. Over residues 808-852 the composition is skewed to basic and acidic residues; the sequence is ELPKEGAEERMASAREVAEQTRRDEQEKERRAVRESQRPSKREIV. Residues 808-1096 are disordered; that stretch reads ELPKEGAEER…ADDDRNWRQK (289 aa). Polar residues predominate over residues 865–875; that stretch reads AQPTQPRTISS. Composition is skewed to basic and acidic residues over residues 878–890, 933–942, and 955–973; these read FGER…RYRE, SNREQARGEA, and QRDR…KRGE. Residues 1008 to 1023 show a composition bias toward polar residues; it reads DSSQRTSAATPTTQPW. Over residues 1085-1096 the composition is skewed to basic and acidic residues; it reads GAADDDRNWRQK.

Belongs to the eIF-3 subunit A family. In terms of assembly, component of the eukaryotic translation initiation factor 3 (eIF-3) complex.

The protein localises to the cytoplasm. Functionally, RNA-binding component of the eukaryotic translation initiation factor 3 (eIF-3) complex, which is involved in protein synthesis of a specialized repertoire of mRNAs and, together with other initiation factors, stimulates binding of mRNA and methionyl-tRNAi to the 40S ribosome. The eIF-3 complex specifically targets and initiates translation of a subset of mRNAs involved in cell proliferation. The polypeptide is Eukaryotic translation initiation factor 3 subunit A (Brugia malayi (Filarial nematode worm)).